The chain runs to 160 residues: Crossover junction endodeoxyribonuclease RuvC (160 aa).

Active-site residues include Asp-9, Glu-68, and Asp-141. Mg(2+)-binding residues include Asp-9, Glu-68, and Asp-141.

This sequence belongs to the RuvC family. Homodimer which binds Holliday junction (HJ) DNA. The HJ becomes 2-fold symmetrical on binding to RuvC with unstacked arms; it has a different conformation from HJ DNA in complex with RuvA. In the full resolvosome a probable DNA-RuvA(4)-RuvB(12)-RuvC(2) complex forms which resolves the HJ. Mg(2+) serves as cofactor.

The protein localises to the cytoplasm. The enzyme catalyses Endonucleolytic cleavage at a junction such as a reciprocal single-stranded crossover between two homologous DNA duplexes (Holliday junction).. Its function is as follows. The RuvA-RuvB-RuvC complex processes Holliday junction (HJ) DNA during genetic recombination and DNA repair. Endonuclease that resolves HJ intermediates. Cleaves cruciform DNA by making single-stranded nicks across the HJ at symmetrical positions within the homologous arms, yielding a 5'-phosphate and a 3'-hydroxyl group; requires a central core of homology in the junction. The consensus cleavage sequence is 5'-(A/T)TT(C/G)-3'. Cleavage occurs on the 3'-side of the TT dinucleotide at the point of strand exchange. HJ branch migration catalyzed by RuvA-RuvB allows RuvC to scan DNA until it finds its consensus sequence, where it cleaves and resolves the cruciform DNA. The polypeptide is Crossover junction endodeoxyribonuclease RuvC (Campylobacter jejuni subsp. jejuni serotype O:23/36 (strain 81-176)).